The chain runs to 149 residues: Urease accessory protein UreE (149 aa).

It belongs to the UreE family.

The protein resides in the cytoplasm. Its function is as follows. Involved in urease metallocenter assembly. Binds nickel. Probably functions as a nickel donor during metallocenter assembly. The chain is Urease accessory protein UreE from Ruegeria pomeroyi (strain ATCC 700808 / DSM 15171 / DSS-3) (Silicibacter pomeroyi).